Here is a 254-residue protein sequence, read N- to C-terminus: Allene oxide cyclase 4, chloroplastic (254 aa).

Residues 1–52 (MIMASSAAASISMITLRNLSRNHQSHQSTFLGFSRSFHNQRISSNSPGLSTR) constitute a chloroplast transit peptide.

Belongs to the allene oxide cyclase family. As to expression, highly expressed in fully developed leaves.

Its subcellular location is the plastid. The protein resides in the chloroplast. The catalysed reaction is (9Z,13S,15Z)-12,13-epoxyoctadeca-9,11,15-trienoate = (9S,13S,15Z)-12-oxophyto-10,15-dienoate. Involved in the production of 12-oxo-phytodienoic acid (OPDA), a precursor of jasmonic acid. This is Allene oxide cyclase 4, chloroplastic (AOC4) from Arabidopsis thaliana (Mouse-ear cress).